Reading from the N-terminus, the 146-residue chain is Ribosome-binding factor A (146 aa).

Over residues 122–134 the composition is skewed to polar residues; the sequence is QQQFGSAEDVTSN. A disordered region spans residues 122–146; the sequence is QQQFGSAEDVTSNDIDEADDTEGKA. Over residues 135 to 146 the composition is skewed to acidic residues; it reads DIDEADDTEGKA.

The protein belongs to the RbfA family. Monomer. Binds 30S ribosomal subunits, but not 50S ribosomal subunits or 70S ribosomes.

Its subcellular location is the cytoplasm. Its function is as follows. One of several proteins that assist in the late maturation steps of the functional core of the 30S ribosomal subunit. Associates with free 30S ribosomal subunits (but not with 30S subunits that are part of 70S ribosomes or polysomes). Required for efficient processing of 16S rRNA. May interact with the 5'-terminal helix region of 16S rRNA. This chain is Ribosome-binding factor A, found in Shewanella sp. (strain ANA-3).